The following is a 398-amino-acid chain: uncharacterized protein (398 aa).

This sequence belongs to the glycosyltransferase 2 family.

This is an uncharacterized protein from Escherichia coli (strain K12).